The primary structure comprises 276 residues: Putative E3 ubiquitin-protein ligase SINA-like 9 (276 aa).

The RING-type zinc finger occupies 38-74 (CPICCEALTSPIFQCDNGHLACGSCCPKLSNKCPACT). Positions 88–274 (VLESILIPCP…MQVFIIENVD (187 aa)) are SBD. The SIAH-type zinc finger occupies 91-149 (SILIPCPNVRFGCTKSFFYGKESAHEKECIFSQCSCPSSVCDYTGSYKDLYAHYKLTHS). Residues C96, C103, H115, C119, C126, C131, H143, and H148 each contribute to the Zn(2+) site.

It belongs to the SINA (Seven in absentia) family.

It catalyses the reaction S-ubiquitinyl-[E2 ubiquitin-conjugating enzyme]-L-cysteine + [acceptor protein]-L-lysine = [E2 ubiquitin-conjugating enzyme]-L-cysteine + N(6)-ubiquitinyl-[acceptor protein]-L-lysine.. It participates in protein modification; protein ubiquitination. Functionally, E3 ubiquitin-protein ligase that mediates ubiquitination and subsequent proteasomal degradation of target proteins. E3 ubiquitin ligases accept ubiquitin from an E2 ubiquitin-conjugating enzyme in the form of a thioester and then directly transfers the ubiquitin to targeted substrates. It probably triggers the ubiquitin-mediated degradation of different substrates. The chain is Putative E3 ubiquitin-protein ligase SINA-like 9 from Arabidopsis thaliana (Mouse-ear cress).